We begin with the raw amino-acid sequence, 406 residues long: Endoplasmic reticulum resident protein 44 (406 aa).

The N-terminal stretch at 1-29 (MHPAVFLSLPDLRCSLLLLVTWVFTPVTT) is a signal peptide. The Thioredoxin domain occupies 30 to 138 (EITSLDTENI…VKALADYIRQ (109 aa)). 2 disulfides stabilise this stretch: C189–C241 and C301–C318. The segment at 236-285 (WIQDKCVPLVREITFENGEELTEEGLPFLILFHMKEDTESLEIFQNEVAR) is interaction with ITPR1. The tract at residues 360–387 (FHHGPDPTDTAPGEQAQDVASSPPESSF) is disordered. The segment covering 377–387 (DVASSPPESSF) has biased composition (polar residues). Residues 403–406 (RDEL) carry the Prevents secretion from ER motif.

Forms mixed disulfides with both ERO1A and ERO1B and cargo folding intermediates; the interactions with ERO1A and ERO1B result in their retention in the endoplasmic reticulum. Directly interacts with ITPR1 in a pH-, redox state- and calcium-dependent manner, but not with ITPR2 or ITPR3. The strength of this interaction inversely correlates with calcium concentration.

Its subcellular location is the endoplasmic reticulum lumen. Mediates thiol-dependent retention in the early secretory pathway, forming mixed disulfides with substrate proteins through its conserved CRFS motif. Inhibits the calcium channel activity of ITPR1. May have a role in the control of oxidative protein folding in the endoplasmic reticulum. Required to retain ERO1A and ERO1B in the endoplasmic reticulum. This chain is Endoplasmic reticulum resident protein 44 (ERP44), found in Homo sapiens (Human).